Here is a 541-residue protein sequence, read N- to C-terminus: Glucose-6-phosphate isomerase (541 aa).

The active-site Proton donor is the E346. Active-site residues include H377 and K506.

The protein belongs to the GPI family.

The protein resides in the cytoplasm. It catalyses the reaction alpha-D-glucose 6-phosphate = beta-D-fructose 6-phosphate. Its pathway is carbohydrate biosynthesis; gluconeogenesis. It functions in the pathway carbohydrate degradation; glycolysis; D-glyceraldehyde 3-phosphate and glycerone phosphate from D-glucose: step 2/4. Functionally, catalyzes the reversible isomerization of glucose-6-phosphate to fructose-6-phosphate. The protein is Glucose-6-phosphate isomerase of Rhizobium meliloti (strain 1021) (Ensifer meliloti).